The chain runs to 149 residues: Transcriptional repressor NrdR (149 aa).

Residues C3–C34 fold into a zinc finger. Residues P49–E139 enclose the ATP-cone domain.

Belongs to the NrdR family. It depends on Zn(2+) as a cofactor.

Its function is as follows. Negatively regulates transcription of bacterial ribonucleotide reductase nrd genes and operons by binding to NrdR-boxes. The sequence is that of Transcriptional repressor NrdR from Yersinia pseudotuberculosis serotype O:1b (strain IP 31758).